The following is a 168-amino-acid chain: 2-C-methyl-D-erythritol 2,4-cyclodiphosphate synthase (168 aa).

A divalent metal cation-binding residues include Asp15 and His17. Residues 15–17 (DVH) and 45–46 (HS) contribute to the 4-CDP-2-C-methyl-D-erythritol 2-phosphate site. His53 serves as a coordination point for a divalent metal cation. Residues 72–76 (FPNSD), Phe150, and Arg153 contribute to the 4-CDP-2-C-methyl-D-erythritol 2-phosphate site.

The protein belongs to the IspF family. As to quaternary structure, homotrimer. The cofactor is a divalent metal cation.

The enzyme catalyses 4-CDP-2-C-methyl-D-erythritol 2-phosphate = 2-C-methyl-D-erythritol 2,4-cyclic diphosphate + CMP. It participates in isoprenoid biosynthesis; isopentenyl diphosphate biosynthesis via DXP pathway; isopentenyl diphosphate from 1-deoxy-D-xylulose 5-phosphate: step 4/6. Functionally, involved in the biosynthesis of isopentenyl diphosphate (IPP) and dimethylallyl diphosphate (DMAPP), two major building blocks of isoprenoid compounds. Catalyzes the conversion of 4-diphosphocytidyl-2-C-methyl-D-erythritol 2-phosphate (CDP-ME2P) to 2-C-methyl-D-erythritol 2,4-cyclodiphosphate (ME-CPP) with a corresponding release of cytidine 5-monophosphate (CMP). This is 2-C-methyl-D-erythritol 2,4-cyclodiphosphate synthase from Anaplasma phagocytophilum (strain HZ).